The sequence spans 276 residues: BES1/BZR1 homolog protein 1 (276 aa).

Disordered regions lie at residues 1 to 30 (MTASGGGSTAATGRMPTWKERENNKKRERR), 76 to 125 (TTYR…PTRF), and 155 to 191 (SAPVTPPISSPRRSNPRLPRWQSSNFPVSAPSSPTRR). Residues 14–87 (RMPTWKEREN…YRKGSRPTET (74 aa)) form a required for DNA-binding region. Residues 84–103 (PTETTVPCSSIQLSPQSSAF) are compositionally biased toward polar residues. The span at 104–122 (QSPIPSYQASPSSSSYPSP) shows a compositional bias: low complexity. Residue Thr159 is modified to Phosphothreonine. The span at 164–174 (SPRRSNPRLPR) shows a compositional bias: low complexity. Over residues 175 to 189 (WQSSNFPVSAPSSPT) the composition is skewed to polar residues.

The protein belongs to the BZR/LAT61 family. In terms of processing, phosphorylated. Phosphorylation increases protein degradation.

The chain is BES1/BZR1 homolog protein 1 (BEH1) from Arabidopsis thaliana (Mouse-ear cress).